The following is a 544-amino-acid chain: Protein angel homolog 2 (544 aa).

The protein belongs to the CCR4/nocturin family.

This is Protein angel homolog 2 (ANGEL2) from Bos taurus (Bovine).